Here is a 726-residue protein sequence, read N- to C-terminus: Transmembrane channel-like protein 8 (726 aa).

Over 1–114 the chain is Cytoplasmic; that stretch reads MLLPRSVSSE…GIRSYFTFLR (114 aa). Serine 6 is modified (phosphoserine). The chain crosses the membrane as a helical span at residues 115–135; the sequence is FLLLLNLLSLLLTASFVLLPL. Over 136 to 200 the chain is Lumenal; that stretch reads VWLRPPDPGP…VGPESSSVYS (65 aa). Asparagine 148 is a glycosylation site (N-linked (GlcNAc...) asparagine). Residues 201-221 form a helical membrane-spanning segment; that stretch reads IRLAYLLSPLACLLLCFCGTL. Residues 222-299 lie on the Cytoplasmic side of the membrane; the sequence is RRMVKGLPQK…AQTACRLLSY (78 aa). The chain crosses the membrane as a helical span at residues 300-320; the sequence is LRVNVLNGLLVVGAISAIFWA. The Lumenal portion of the chain corresponds to 321–338; that stretch reads TKYSQDNKEESLFLLLQY. A helical membrane pass occupies residues 339-359; that stretch reads LPPGVIALVNFLGPLLFTFLV. At 360-426 the chain is on the cytoplasmic side; it reads QLENYPPNTE…QCWENSVGEE (67 aa). The segment at 362 to 530 is TMC domain; sequence ENYPPNTEVN…SSRPFRASSS (169 aa). The helical transmembrane segment at 427–447 threads the bilayer; the sequence is LYKLSIFNFLLTVAFAFLVTL. The Lumenal segment spans residues 448-488; it reads PRRLLVDRFSGRFWAWLEREEFLVPKNVLDIVAGQTVTWMG. A helical transmembrane segment spans residues 489–509; that stretch reads LFYCPLLPLLNSVFLFLTFYI. At 510-531 the chain is on the cytoplasmic side; that stretch reads KKYTLLKNSRASSRPFRASSST. The helical transmembrane segment at 532 to 552 threads the bilayer; that stretch reads FFFQLVLLLGLLLAAVPLGYV. Over 553 to 594 the chain is Lumenal; the sequence is VSSIHSSWDCGLFTNYSAPWQVVPELVALGLPPIGQRALHYL. An N-linked (GlcNAc...) asparagine glycan is attached at asparagine 567. The helical transmembrane segment at 595 to 615 threads the bilayer; the sequence is GSHAFSFPLLIMLSLVLTVCV. The Cytoplasmic portion of the chain corresponds to 616–726; it reads SQTQANARAI…RFRFPSGAEL (111 aa). Positions 651 to 726 are disordered; the sequence is PEPGPSDSPG…RFRFPSGAEL (76 aa). Over residues 652-662 the composition is skewed to pro residues; it reads EPGPSDSPGPK. 2 positions are modified to phosphoserine: serine 658 and serine 673.

This sequence belongs to the TMC family. Interacts with TMC6. Interacts and forms a complex with TMC6 and CIB1; the interaction stabilizes each component of the complex. Interacts and forms a complex with TMC6 and SLC30A1/ZNT1; the interaction regulates zinc transport into the ER. Interacts with TRADD; the interaction competes with TRADD/RIPK1/TRAF2/cIAPs complex I formation and facilites complex II formation. As to quaternary structure, (Microbial infection) Interacts with human papillomavirus 16/HPV16 protein E5; the interaction alleviates TMC8-mediated transcription factors inhibition. Expressed in placenta, prostate and testis.

Its subcellular location is the endoplasmic reticulum membrane. It is found in the golgi apparatus membrane. The protein resides in the nucleus membrane. Acts as a regulatory protein involved in the regulation of numerous cellular processes. Together with its homolog TMC6/EVER1, forms a complex with calcium-binding protein CIB1 in lymphocytes and keratynocytes where TMC6 and TMC8 stabilize CIB1 levels and reciprocally. Together with TMC6, also forms a complex with and activates zinc transporter ZNT1 at the ER membrane of keratynocytes, thereby facilitating zinc uptake into the ER. Also inhibits receptor-mediated calcium release from ER stores and calcium activated and volume regulated chloride channels. Down-regulates the activity of transcription factors induced by zinc and cytokines. Also sequesters TRADD which impairs the recruitment of TRAF2 and RIPK1 in the pro-survival complex I and promotes proapoptotic complex II formation, and may therefore be involved in TNF-induced cell death/survival decisions. This chain is Transmembrane channel-like protein 8, found in Homo sapiens (Human).